A 250-amino-acid chain; its full sequence is Probable transcriptional regulatory protein tll0175 (250 aa).

The protein belongs to the TACO1 family.

It localises to the cytoplasm. The sequence is that of Probable transcriptional regulatory protein tll0175 from Thermosynechococcus vestitus (strain NIES-2133 / IAM M-273 / BP-1).